The sequence spans 662 residues: Calcium-dependent protease (662 aa).

The 334-residue stretch at 196–529 folds into the Peptidase S8 domain; that stretch reads QWHLKETTIG…YGRINALKAV (334 aa). Active-site charge relay system residues include Asp233, His270, and Ser466. The P/Homo B domain occupies 535–662; the sequence is AQPEPVSIFT…IRSLTIELGF (128 aa).

It belongs to the peptidase S8 family.

The protein resides in the cytoplasm. In terms of biological role, degrades phycobiliproteins in vitro. Has a substrate specificity similar to that of trypsin. This chain is Calcium-dependent protease (prcA), found in Nostoc sp. (strain PCC 7120 / SAG 25.82 / UTEX 2576).